The sequence spans 214 residues: 3-isopropylmalate dehydratase small subunit (214 aa).

Belongs to the LeuD family. LeuD type 1 subfamily. Heterodimer of LeuC and LeuD.

The enzyme catalyses (2R,3S)-3-isopropylmalate = (2S)-2-isopropylmalate. It participates in amino-acid biosynthesis; L-leucine biosynthesis; L-leucine from 3-methyl-2-oxobutanoate: step 2/4. Its function is as follows. Catalyzes the isomerization between 2-isopropylmalate and 3-isopropylmalate, via the formation of 2-isopropylmaleate. The polypeptide is 3-isopropylmalate dehydratase small subunit (Nitrosococcus oceani (strain ATCC 19707 / BCRC 17464 / JCM 30415 / NCIMB 11848 / C-107)).